The sequence spans 239 residues: Small ribosomal subunit protein uS2 (239 aa).

This sequence belongs to the universal ribosomal protein uS2 family.

In Lysinibacillus sphaericus (strain C3-41), this protein is Small ribosomal subunit protein uS2.